A 687-amino-acid polypeptide reads, in one-letter code: Glycine--tRNA ligase beta subunit (687 aa).

The protein belongs to the class-II aminoacyl-tRNA synthetase family. In terms of assembly, tetramer of two alpha and two beta subunits.

It localises to the cytoplasm. The catalysed reaction is tRNA(Gly) + glycine + ATP = glycyl-tRNA(Gly) + AMP + diphosphate. This Geotalea daltonii (strain DSM 22248 / JCM 15807 / FRC-32) (Geobacter daltonii) protein is Glycine--tRNA ligase beta subunit.